The following is a 397-amino-acid chain: MQETWRWFGPNDSISLQKIAQAGATGIVSSLHHVPTGALWQLEEIEAQKKIIEDAGLEWSVIESIPVHNDIKTRTGNFQEYIENYKQSVINAGKAGVKTICYNFMPVVDWTRTNLSYRLPNASQALRFEMTDFAAYDVYLLQRENAAADYSEEVLNRAKARFDAMDETEKDLLEKNIIAGLPGGEGSYTRDTIREAIQQFIDLGTEGFRNHMFEFLREIIPAAESVGVKMCIHPDDPPFSLFGLPRVVSTADDARKLLNAVPSPSNGLTLCAGSYGARGDNDLVGMAKEFGDRIYFVHLRNVKREPDGSFYEADHLDGDNDMVGLVNALLCEERRRHAAGETNCAIPMRPDHGHLMADELNLPDVKPGYSYTGRMKGLAELRGVIHALEVLQRQHAL.

The protein belongs to the mannonate dehydratase family. It depends on Fe(2+) as a cofactor. Mn(2+) serves as cofactor.

It carries out the reaction D-mannonate = 2-dehydro-3-deoxy-D-gluconate + H2O. The protein operates within carbohydrate metabolism; pentose and glucuronate interconversion. In terms of biological role, catalyzes the dehydration of D-mannonate. The chain is Mannonate dehydratase from Saccharophagus degradans (strain 2-40 / ATCC 43961 / DSM 17024).